The chain runs to 125 residues: Glycine cleavage system H protein (125 aa).

Residues 19 to 101 (GAVVGITDFA…NGSGWFFKLT (83 aa)) form the Lipoyl-binding domain. An N6-lipoyllysine modification is found at Lys-60.

The protein belongs to the GcvH family. The glycine cleavage system is composed of four proteins: P, T, L and H. Requires (R)-lipoate as cofactor.

Functionally, the glycine cleavage system catalyzes the degradation of glycine. The H protein shuttles the methylamine group of glycine from the P protein to the T protein. This Methylocella silvestris (strain DSM 15510 / CIP 108128 / LMG 27833 / NCIMB 13906 / BL2) protein is Glycine cleavage system H protein.